Here is a 162-residue protein sequence, read N- to C-terminus: MKRIEIFTDGACSGNPGPGGWGAILRYNGTEKELYGGEADTTNNRMELTAAIEALEALKEPCEVDLHTDSNYLRDGISGWIEGWKRNGWRTADRKPVKNAELWQALDEARRRHKVHWHWVRGHAGHPENERADALARAGMAPFKKKKGGDTASSEEGSARRR.

The 141-residue stretch at Met1–Ala141 folds into the RNase H type-1 domain. Asp9, Glu47, Asp69, and Asp133 together coordinate Mg(2+). The disordered stretch occupies residues Gly139–Arg162.

It belongs to the RNase H family. Monomer. It depends on Mg(2+) as a cofactor.

The protein resides in the cytoplasm. It catalyses the reaction Endonucleolytic cleavage to 5'-phosphomonoester.. In terms of biological role, endonuclease that specifically degrades the RNA of RNA-DNA hybrids. The chain is Ribonuclease H from Chelativorans sp. (strain BNC1).